We begin with the raw amino-acid sequence, 693 residues long: Auxin response factor 10 (693 aa).

The segment at residues 115–217 (FAKTLTQSDA…DLCVGIRRAK (103 aa)) is a DNA-binding region (TF-B3). In terms of domain architecture, PB1 spans 580 to 668 (TGHCKVFMES…DIGGDNVRKT (89 aa)).

It belongs to the ARF family. In terms of assembly, homodimers and heterodimers. Expressed in the whole plant.

The protein resides in the nucleus. Its function is as follows. Auxin response factors (ARFs) are transcriptional factors that bind specifically to the DNA sequence 5'-TGTCTC-3' found in the auxin-responsive promoter elements (AuxREs). Could act as transcriptional activator or repressor. Formation of heterodimers with Aux/IAA proteins may alter their ability to modulate early auxin response genes expression. The polypeptide is Auxin response factor 10 (ARF10) (Arabidopsis thaliana (Mouse-ear cress)).